Here is a 333-residue protein sequence, read N- to C-terminus: Lipoyl synthase (333 aa).

Residues cysteine 56, cysteine 61, cysteine 67, cysteine 82, cysteine 86, cysteine 89, and serine 293 each contribute to the [4Fe-4S] cluster site. The 215-residue stretch at 68 to 282 (WEDREATFLI…GRVGAELGFS (215 aa)) folds into the Radical SAM core domain. The tract at residues 301-333 (QQAMTARDQDRSEMSVPPESVSENSHGQRPSPW) is disordered. Positions 314 to 325 (MSVPPESVSENS) are enriched in low complexity.

The protein belongs to the radical SAM superfamily. Lipoyl synthase family. [4Fe-4S] cluster is required as a cofactor.

Its subcellular location is the cytoplasm. It carries out the reaction [[Fe-S] cluster scaffold protein carrying a second [4Fe-4S](2+) cluster] + N(6)-octanoyl-L-lysyl-[protein] + 2 oxidized [2Fe-2S]-[ferredoxin] + 2 S-adenosyl-L-methionine + 4 H(+) = [[Fe-S] cluster scaffold protein] + N(6)-[(R)-dihydrolipoyl]-L-lysyl-[protein] + 4 Fe(3+) + 2 hydrogen sulfide + 2 5'-deoxyadenosine + 2 L-methionine + 2 reduced [2Fe-2S]-[ferredoxin]. It participates in protein modification; protein lipoylation via endogenous pathway; protein N(6)-(lipoyl)lysine from octanoyl-[acyl-carrier-protein]: step 2/2. In terms of biological role, catalyzes the radical-mediated insertion of two sulfur atoms into the C-6 and C-8 positions of the octanoyl moiety bound to the lipoyl domains of lipoate-dependent enzymes, thereby converting the octanoylated domains into lipoylated derivatives. The polypeptide is Lipoyl synthase (Frankia casuarinae (strain DSM 45818 / CECT 9043 / HFP020203 / CcI3)).